The following is a 252-amino-acid chain: 3-dehydroquinate dehydratase (252 aa).

3-dehydroquinate is bound by residues Ser-21, 46-48 (EWR), and Arg-82. His-143 acts as the Proton donor/acceptor in catalysis. Lys-170 (schiff-base intermediate with substrate) is an active-site residue. The 3-dehydroquinate site is built by Arg-213, Ser-232, and Gln-236.

Belongs to the type-I 3-dehydroquinase family. In terms of assembly, homodimer.

It catalyses the reaction 3-dehydroquinate = 3-dehydroshikimate + H2O. The protein operates within metabolic intermediate biosynthesis; chorismate biosynthesis; chorismate from D-erythrose 4-phosphate and phosphoenolpyruvate: step 3/7. Functionally, involved in the third step of the chorismate pathway, which leads to the biosynthesis of aromatic amino acids. Catalyzes the cis-dehydration of 3-dehydroquinate (DHQ) and introduces the first double bond of the aromatic ring to yield 3-dehydroshikimate. This chain is 3-dehydroquinate dehydratase, found in Escherichia coli O127:H6 (strain E2348/69 / EPEC).